The primary structure comprises 176 residues: Flavodoxin 1 (176 aa).

The Flavodoxin-like domain maps to Thr-4 to Ser-165.

Belongs to the flavodoxin family. The cofactor is FMN.

Low-potential electron donor to a number of redox enzymes (Potential). Involved in the reactivation of inactive cob(II)alamin in methionine synthase. The chain is Flavodoxin 1 (fldA) from Escherichia coli O157:H7.